Here is a 90-residue protein sequence, read N- to C-terminus: METWHMTAHGRVQGVGYRAGCAQAAIALGVRGWVRNRADGTVEVMASGTIQQLEALRNWMQAGPPAAHVARVDVEPGQGKFEDFDLRPTL.

Residues 3–88 (TWHMTAHGRV…GKFEDFDLRP (86 aa)) enclose the Acylphosphatase-like domain. Catalysis depends on residues Arg-18 and Asn-36.

Belongs to the acylphosphatase family.

It catalyses the reaction an acyl phosphate + H2O = a carboxylate + phosphate + H(+). The protein is Acylphosphatase (acyP) of Cupriavidus pinatubonensis (strain JMP 134 / LMG 1197) (Cupriavidus necator (strain JMP 134)).